We begin with the raw amino-acid sequence, 449 residues long: Glutamyl-tRNA reductase (449 aa).

Residues 58-61, Ser121, 126-128, and Gln132 contribute to the substrate site; these read TCNR and ETQ. Residue Cys59 is the Nucleophile of the active site. NADP(+) is bound at residue 203-208; that stretch reads GLGEMA.

The protein belongs to the glutamyl-tRNA reductase family. In terms of assembly, homodimer.

It carries out the reaction (S)-4-amino-5-oxopentanoate + tRNA(Glu) + NADP(+) = L-glutamyl-tRNA(Glu) + NADPH + H(+). Its pathway is porphyrin-containing compound metabolism; protoporphyrin-IX biosynthesis; 5-aminolevulinate from L-glutamyl-tRNA(Glu): step 1/2. Catalyzes the NADPH-dependent reduction of glutamyl-tRNA(Glu) to glutamate 1-semialdehyde (GSA). This Helicobacter pylori (strain ATCC 700392 / 26695) (Campylobacter pylori) protein is Glutamyl-tRNA reductase.